We begin with the raw amino-acid sequence, 53 residues long: uncharacterized protein (53 aa).

Residues 20–42 form a helical membrane-spanning segment; that stretch reads ILFPVLLVFDTILIVVGIALILF.

The protein resides in the membrane. This is an uncharacterized protein from Archaeoglobus fulgidus (strain ATCC 49558 / DSM 4304 / JCM 9628 / NBRC 100126 / VC-16).